Consider the following 283-residue polypeptide: Lolitrem B biosynthesis cluster protein S (283 aa).

The first 27 residues, 1-27 (MSRSDWIFISLQGFFCLAGVIWKSREG), serve as a signal peptide directing secretion. A run of 5 helical transmembrane segments spans residues 73 to 93 (WFWL…LIIL), 112 to 132 (LGYL…SLWI), 157 to 177 (IFWC…VATL), 219 to 239 (MTGT…ALEA), and 250 to 270 (VRMF…DVLL).

The protein belongs to the ltmS family.

The protein resides in the membrane. Its function is as follows. Part of the gene cluster that mediates the biosynthesis of lolitrems, indole-diterpene mycotoxins that are potent tremorgens in mammals, and are synthesized by clavicipitaceous fungal endophytes in association with their grass hosts. The geranylgeranyl diphosphate (GGPP) synthase ltmG is proposed to catalyze the first step in lolitrem biosynthesis. LtmG catalyzes a series of iterative condensations of isopentenyl diphosphate (IPP) with dimethylallyl diphosphate (DMAPP), geranyl diphosphate (GPP), and farnesyl diphosphate (FPP), to form GGPP. GGPP then condenses with indole-3-glycerol phosphate to form 3-geranylgeranylindole, an acyclic intermediate, to be incorporated into paxilline. Either ltmG or ltmC could be responsible for this step, as both are putative prenyl transferases. The FAD-dependent monooxygenase ltmM then catalyzes the epoxidation of the two terminal alkenes of the geranylgeranyl moiety, which is subsequently cyclized by ltmB, to paspaline. The cytochrome P450 monooxygenases ltmQ and ltmP can sequentially oxidize paspaline to terpendole E and terpendole F. Alternatively, ltmP converts paspaline to an intermediate which is oxidized by ltmQ to terpendole F. LtmF, ltmK, ltmE and ltmJ appear to be unique to the epichloe endophytes. The prenyltransferase ltmF is involved in the 27-hydroxyl-O-prenylation. The cytochrome P450 monooxygenase ltmK is required for the oxidative acetal ring formation. The multi-functional prenyltransferase ltmE is required for C20- and C21-prenylations of the indole ring of paspalanes and acts together with the cytochrome P450 monooxygenase ltmJ to yield lolitremanes by multiple oxidations and ring closures. The stereoisomer pairs of lolitriol and lolitrem N or lolitrem B and lolitrem F may be attributed to variations in the way in which ring closure can occur under the action of ltmJ. While the major product of this pathway is lolitrem B, the prenyl transferases and cytochrome P450 monooxygenases identified in this pathway have a remarkable versatility in their regio- and stereo-specificities to generate a diverse range of metabolites that are products of a metabolic grid rather than a linear pathway. The sequence is that of Lolitrem B biosynthesis cluster protein S from Epichloe festucae (strain Fl1).